Here is a 943-residue protein sequence, read N- to C-terminus: Multimerin-2 (943 aa).

The signal sequence occupies residues 1–22 (MIPTLLLGFGVYLSWGLLGSWA). In terms of domain architecture, EMI spans 54–132 (RRNWCPYQKS…PGFQGPDCQD (79 aa)). 3 cysteine pairs are disulfide-bonded: C58/C122, C85/C92, and C121/C130. S63 is a glycosylation site (O-linked (Fuc...) serine). O-linked (Fuc) threonine glycosylation occurs at T67. The tract at residues 128 to 150 (PDCQDHNPTANPEPTEPSGKLQE) is disordered. N205, N214, N249, N261, N350, N379, N439, and N472 each carry an N-linked (GlcNAc...) asparagine glycan. Coiled-coil stretches lie at residues 391-480 (EEEL…HLHA) and 551-580 (RGEGERARAERARIRSQLRALDHAVEALKT). N583 is a glycosylation site (N-linked (GlcNAc...) asparagine). A coiled-coil region spans residues 688–720 (DSGREEEAMTLAELEQEIRRLSSDVKQIGQCCE). N728 and N766 each carry an N-linked (GlcNAc...) asparagine glycan. A disordered region spans residues 778–801 (LSKKDKKQPRGPGESRKRDKKQVV). The C1q domain maps to 815-943 (ETGSPVAFYA…AFGGFLMFKT (129 aa)). N-linked (GlcNAc...) asparagine glycosylation occurs at N839.

Heteromer of p110, p125, p140 and p200 subunits; disulfide-linked. Interacts with VEGFA. Interacts with CD93; this interaction promotes angiogenesis. Interacts with CD248. In terms of processing, N- and O-glycosylated. Post-translationally, processed by matrix metalloproteinases (MMPs) including MMP9 and, to a lesser degree, by MMP2 upon angiogenic stimulation. O-fucosylated within the EMI domain (at Ser-63 and Thr-67) by FUT10/POFUT3 and FUT11/POFUT4.

The protein resides in the secreted. It localises to the extracellular space. It is found in the extracellular matrix. In terms of biological role, extracellular matrix protein that plays significant roles in the vascular system and is required for the maintenance and stability of blood vessel. Affects several essential steps in angiogenesis including endothelial cell proliferation, migration, and tube formation. Positively regulates angiogenesis by acting as a ligand for CD93 receptor. In Mus musculus (Mouse), this protein is Multimerin-2.